The primary structure comprises 548 residues: Esterase-5A (548 aa).

The N-terminal stretch at 1–19 (MHLVRWLICLIQLWIQLGA) is a signal peptide. A disulfide bond links Cys-87 and Cys-106. N-linked (GlcNAc...) asparagine glycosylation is found at Asn-95 and Asn-116. The active-site Acyl-ester intermediate is Ser-210. Cys-262 and Cys-274 are joined by a disulfide. Residue Asn-479 is glycosylated (N-linked (GlcNAc...) asparagine). A disulfide bridge links Cys-518 with Cys-539.

This sequence belongs to the type-B carboxylesterase/lipase family.

It localises to the secreted. The enzyme catalyses a carboxylic ester + H2O = an alcohol + a carboxylate + H(+). The sequence is that of Esterase-5A (Est-5A) from Drosophila persimilis (Fruit fly).